The primary structure comprises 728 residues: Probable LRR receptor-like serine/threonine-protein kinase At1g14390 (728 aa).

A signal peptide spans 1 to 27; that stretch reads MHSSSKSQAFSLTFLLFLFLLPSVSES. Topologically, residues 28-356 are extracellular; sequence QLISSESRTL…EEDTGIELGL (329 aa). N-linked (GlcNAc...) asparagine glycosylation is found at Asn-55 and Asn-85. LRR repeat units lie at residues 74-96, 106-130, 131-155, 157-178, 179-202, 204-224, 225-248, 249-272, and 274-295; these read NGHV…RFSS, LSNL…IIRL, SSSL…ISSL, NLRS…LRGL, SNLQ…LASN, ITIS…IKKL, NKLQ…LLSL, PSLQ…SLCN, and KLRI…CFSS. 2 N-linked (GlcNAc...) asparagine glycosylation sites follow: Asn-138 and Asn-169. Asn-210 is a glycosylation site (N-linked (GlcNAc...) asparagine). N-linked (GlcNAc...) asparagine glycans are attached at residues Asn-253 and Asn-267. A helical membrane pass occupies residues 357 to 377; the sequence is VIGIIIGVILVSAVLAGLVLV. The Cytoplasmic portion of the chain corresponds to 378-728; sequence RMRKSRSKEE…ENLGLGGSEL (351 aa). The 289-residue stretch at 421-709 folds into the Protein kinase domain; sequence TMRSAVIGLS…DVVWNLQYTI (289 aa).

This sequence belongs to the protein kinase superfamily. Ser/Thr protein kinase family.

The protein localises to the membrane. It carries out the reaction L-seryl-[protein] + ATP = O-phospho-L-seryl-[protein] + ADP + H(+). It catalyses the reaction L-threonyl-[protein] + ATP = O-phospho-L-threonyl-[protein] + ADP + H(+). This chain is Probable LRR receptor-like serine/threonine-protein kinase At1g14390, found in Arabidopsis thaliana (Mouse-ear cress).